The primary structure comprises 155 residues: Putative pre-16S rRNA nuclease (155 aa).

The protein belongs to the YqgF nuclease family.

It is found in the cytoplasm. Functionally, could be a nuclease involved in processing of the 5'-end of pre-16S rRNA. The protein is Putative pre-16S rRNA nuclease of Wolbachia sp. subsp. Drosophila simulans (strain wRi).